A 337-amino-acid polypeptide reads, in one-letter code: tRNA N6-adenosine threonylcarbamoyltransferase (337 aa).

Fe cation contacts are provided by His-111 and His-115. Residues 134 to 138 (LVSGG), Asp-167, Gly-180, and Asn-272 each bind substrate. Residue Asp-300 participates in Fe cation binding.

Belongs to the KAE1 / TsaD family. It depends on Fe(2+) as a cofactor.

Its subcellular location is the cytoplasm. The catalysed reaction is L-threonylcarbamoyladenylate + adenosine(37) in tRNA = N(6)-L-threonylcarbamoyladenosine(37) in tRNA + AMP + H(+). Required for the formation of a threonylcarbamoyl group on adenosine at position 37 (t(6)A37) in tRNAs that read codons beginning with adenine. Is involved in the transfer of the threonylcarbamoyl moiety of threonylcarbamoyl-AMP (TC-AMP) to the N6 group of A37, together with TsaE and TsaB. TsaD likely plays a direct catalytic role in this reaction. This Pectobacterium atrosepticum (strain SCRI 1043 / ATCC BAA-672) (Erwinia carotovora subsp. atroseptica) protein is tRNA N6-adenosine threonylcarbamoyltransferase.